A 193-amino-acid chain; its full sequence is Peptidyl-tRNA hydrolase (193 aa).

H17 is a tRNA binding site. H22 functions as the Proton acceptor in the catalytic mechanism. 3 residues coordinate tRNA: F68, N70, and N116.

It belongs to the PTH family. In terms of assembly, monomer.

It is found in the cytoplasm. The catalysed reaction is an N-acyl-L-alpha-aminoacyl-tRNA + H2O = an N-acyl-L-amino acid + a tRNA + H(+). Its function is as follows. Hydrolyzes ribosome-free peptidyl-tRNAs (with 1 or more amino acids incorporated), which drop off the ribosome during protein synthesis, or as a result of ribosome stalling. Functionally, catalyzes the release of premature peptidyl moieties from peptidyl-tRNA molecules trapped in stalled 50S ribosomal subunits, and thus maintains levels of free tRNAs and 50S ribosomes. The chain is Peptidyl-tRNA hydrolase from Xanthomonas axonopodis pv. citri (strain 306).